Consider the following 167-residue polypeptide: Photosystem I assembly protein Ycf3 (167 aa).

3 TPR repeats span residues 35–68, 72–105, and 120–153; these read AFTY…EIDP, SYIL…NPSL, and GEQA…APSN.

This sequence belongs to the Ycf3 family.

Its subcellular location is the plastid. It is found in the chloroplast thylakoid membrane. Its function is as follows. Essential for the assembly of the photosystem I (PSI) complex. May act as a chaperone-like factor to guide the assembly of the PSI subunits. The polypeptide is Photosystem I assembly protein Ycf3 (Marchantia polymorpha (Common liverwort)).